The sequence spans 131 residues: Small ribosomal subunit protein bS6 (131 aa).

The segment at 92 to 131 (RVDEHKDGPSVQMQKRDERERGDRGDRGERRERRDRDDRN) is disordered.

This sequence belongs to the bacterial ribosomal protein bS6 family.

Functionally, binds together with bS18 to 16S ribosomal RNA. This chain is Small ribosomal subunit protein bS6, found in Paracoccus denitrificans (strain Pd 1222).